A 310-amino-acid chain; its full sequence is Mas-related G-protein coupled receptor member E (310 aa).

The Extracellular portion of the chain corresponds to 1 to 22; that stretch reads MTSLSVHTDSPSTQGEMAFNLT. Asparagine 20 is a glycosylation site (N-linked (GlcNAc...) asparagine). The chain crosses the membrane as a helical span at residues 23-43; that stretch reads ILSLTELLSLGGLLGNGVALW. The Cytoplasmic segment spans residues 44–60; the sequence is LLNQNVYRNPFSIYLLD. Residues 61 to 81 traverse the membrane as a helical segment; that stretch reads VACADLIFLCCHMVAIIPELL. The Extracellular segment spans residues 82–92; it reads QDQLNFPEFVH. A helical membrane pass occupies residues 93 to 113; it reads ISLTMLRFFCYIVGLSLLAAI. Over 114–133 the chain is Cytoplasmic; the sequence is STEQCLATLFPAWYLCRRPR. The chain crosses the membrane as a helical span at residues 134-154; sequence YLTTCVCALIWVLCLLLDLLL. The Extracellular portion of the chain corresponds to 155-174; it reads SGACTQFFGAPSYHLCDMLW. The helical transmembrane segment at 175–195 threads the bilayer; it reads LVVAVLLAALCCTMCVTSLLL. Topologically, residues 196-213 are cytoplasmic; it reads LLRVERGPERHQPRGFPT. The helical transmembrane segment at 214 to 234 threads the bilayer; that stretch reads LVLLAVLLFLFCGLPFGIFWL. Residues 235-248 lie on the Extracellular side of the membrane; the sequence is SKNLSWHIPLYFYH. N-linked (GlcNAc...) asparagine glycosylation occurs at asparagine 237. The chain crosses the membrane as a helical span at residues 249–269; the sequence is FSFFMASVHSAAKPAIYFFLG. Topologically, residues 270–310 are cytoplasmic; it reads STPGQRFREPLRLVLQRALGDEAELGAGREASQGGLVDMTV.

It belongs to the G-protein coupled receptor 1 family. Mas subfamily.

The protein localises to the cell membrane. Orphan receptor. May regulate nociceptor function and/or development, including the sensation or modulation of pain. The polypeptide is Mas-related G-protein coupled receptor member E (Mrgpre) (Mus musculus (Mouse)).